The primary structure comprises 1040 residues: Multidrug resistance protein MdtB (1040 aa).

The next 12 helical transmembrane spans lie at 16–36 (FIMR…AGII), 347–367 (LMMA…NIPA), 369–389 (IIPG…MVFL), 396–416 (LTLM…IVVI), 440–460 (IGFT…PLLF), 472–492 (FAIT…TLTP), 537–557 (WLTL…WVFI), 863–883 (LGST…VLGI), 888–908 (FIHP…ALLA), 911–931 (IAGS…IGIV), 968–988 (ILMT…STGV), and 998–1018 (IGMV…TPVI).

This sequence belongs to the resistance-nodulation-cell division (RND) (TC 2.A.6) family. MdtB subfamily. As to quaternary structure, part of a tripartite efflux system composed of MdtA, MdtB and MdtC. MdtB forms a heteromultimer with MdtC.

Its subcellular location is the cell inner membrane. The MdtABC tripartite complex confers resistance against novobiocin and deoxycholate. The polypeptide is Multidrug resistance protein MdtB (Escherichia coli O157:H7 (strain EC4115 / EHEC)).